The following is a 186-amino-acid chain: NADH-ubiquinone oxidoreductase 17.8 kDa subunit, mitochondrial (186 aa).

The transit peptide at 1–26 directs the protein to the mitochondrion; the sequence is MSSFRLGVSRVARQVRAPCVRNTRRY. The disordered stretch occupies residues 22–49; that stretch reads NTRRYASDSHAPADHTHSAAGHGEHHHA. Over residues 26–49 the composition is skewed to basic and acidic residues; the sequence is YASDSHAPADHTHSAAGHGEHHHA. A helical transmembrane segment spans residues 58–78; the sequence is LGTAFYVIFGAIPAFGALYYF.

As to quaternary structure, complex I is composed of about 40 different subunits.

The protein resides in the mitochondrion inner membrane. The catalysed reaction is a ubiquinone + NADH + 5 H(+)(in) = a ubiquinol + NAD(+) + 4 H(+)(out). Its function is as follows. Transfer of electrons from NADH to the respiratory chain. The immediate electron acceptor for the enzyme is believed to be ubiquinone. This is NADH-ubiquinone oxidoreductase 17.8 kDa subunit, mitochondrial (nuo17.8) from Neurospora crassa (strain ATCC 24698 / 74-OR23-1A / CBS 708.71 / DSM 1257 / FGSC 987).